A 100-amino-acid polypeptide reads, in one-letter code: Urease subunit gamma (100 aa).

It belongs to the urease gamma subunit family. In terms of assembly, heterotrimer of UreA (gamma), UreB (beta) and UreC (alpha) subunits. Three heterotrimers associate to form the active enzyme.

Its subcellular location is the cytoplasm. It catalyses the reaction urea + 2 H2O + H(+) = hydrogencarbonate + 2 NH4(+). It participates in nitrogen metabolism; urea degradation; CO(2) and NH(3) from urea (urease route): step 1/1. The sequence is that of Urease subunit gamma from Nocardia farcinica (strain IFM 10152).